The primary structure comprises 249 residues: MTTPHTLLRSLPSDLDPNRLPRHVAAIMDGNGRWASKRNLPRVMGHQAGVSALKELLRCCKDWGIGALTVYAFSTENWKRPQYEVEFLMALFEKVLNHELSEMVDEGVRIRFVGALAHLPGALQSAIEGAMAATEANTAVEFTVATNYGGRQEIVNACRELAEQVRSGRLLPEQIDEKLFAQHLYTRELSDPDLLIRTSGEQRLSNYLLWQMAYTEIYVADVLWPDFDRAAFHAALQSYQGRQRRFGKV.

D29 is a catalytic residue. Residue D29 participates in Mg(2+) binding. Residues 30 to 33 (GNGR), W34, R42, H46, and 74 to 76 (STE) contribute to the substrate site. The active-site Proton acceptor is the N77. Residues W78, R80, R197, and 203–205 (RLS) each bind substrate. E216 provides a ligand contact to Mg(2+).

The protein belongs to the UPP synthase family. As to quaternary structure, homodimer. Requires Mg(2+) as cofactor.

Its function is as follows. Catalyzes the condensation of isopentenyl diphosphate (IPP) with allylic pyrophosphates generating different type of terpenoids. The sequence is that of Isoprenyl transferase from Gloeobacter violaceus (strain ATCC 29082 / PCC 7421).